Here is a 309-residue protein sequence, read N- to C-terminus: Small ribosomal subunit biogenesis GTPase RsgA (309 aa).

In terms of domain architecture, CP-type G spans 64-225 (ENELVRPPLA…VADTPGFSTY (162 aa)). Residues 113 to 116 (SKTD) and 168 to 176 (GQTGAGKST) contribute to the GTP site. Zn(2+) contacts are provided by C249, C254, H256, and C262.

The protein belongs to the TRAFAC class YlqF/YawG GTPase family. RsgA subfamily. In terms of assembly, monomer. Associates with 30S ribosomal subunit, binds 16S rRNA. It depends on Zn(2+) as a cofactor.

The protein localises to the cytoplasm. Functionally, one of several proteins that assist in the late maturation steps of the functional core of the 30S ribosomal subunit. Helps release RbfA from mature subunits. May play a role in the assembly of ribosomal proteins into the subunit. Circularly permuted GTPase that catalyzes slow GTP hydrolysis, GTPase activity is stimulated by the 30S ribosomal subunit. This is Small ribosomal subunit biogenesis GTPase RsgA from Pediococcus pentosaceus (strain ATCC 25745 / CCUG 21536 / LMG 10740 / 183-1w).